Consider the following 239-residue polypeptide: Ribonuclease PH (239 aa).

Phosphate is bound by residues R86 and 124 to 126; that span reads GTR.

It belongs to the RNase PH family. As to quaternary structure, homohexameric ring arranged as a trimer of dimers.

It catalyses the reaction tRNA(n+1) + phosphate = tRNA(n) + a ribonucleoside 5'-diphosphate. In terms of biological role, phosphorolytic 3'-5' exoribonuclease that plays an important role in tRNA 3'-end maturation. Removes nucleotide residues following the 3'-CCA terminus of tRNAs; can also add nucleotides to the ends of RNA molecules by using nucleoside diphosphates as substrates, but this may not be physiologically important. Probably plays a role in initiation of 16S rRNA degradation (leading to ribosome degradation) during starvation. The chain is Ribonuclease PH from Azoarcus sp. (strain BH72).